The following is a 135-amino-acid chain: UPF0216 protein MTH_949 (135 aa).

The protein belongs to the UPF0216 family.

The protein is UPF0216 protein MTH_949 of Methanothermobacter thermautotrophicus (strain ATCC 29096 / DSM 1053 / JCM 10044 / NBRC 100330 / Delta H) (Methanobacterium thermoautotrophicum).